The chain runs to 260 residues: MFEARLVQGSILKKVLEALKDLITEACWDVSSSGISLQSMDSSHVSLVQLTLRHDGFDSYRCDRNLAMGVNLSSMSKILKCAGNEDIITLRAEDNADTLALVFETLNQEKVSDYEMKLMDLDVEQLGIPEQEYSCVVKMPSGEFARICRDLSQIGDAVMISCAKDGVKFSASGELGTGNIKLSQTSNVDKEDEAVTIEMNEPVQLIFALNYLNFFTKATPLSKTVTLSMSADIPLVVEYKIADMGHIKYYLAPKIDEEAS.

Residues 61 to 80 (RCDRNLAMGVNLSSMSKILK) mediate DNA binding. Residue Lys-164 forms a Glycyl lysine isopeptide (Lys-Gly) (interchain with G-Cter in ubiquitin) linkage.

It belongs to the PCNA family. In terms of assembly, homotrimer. Forms a complex with activator 1 heteropentamer in the presence of ATP. Component of the replisome complex. Post-translationally, monoubiquitinated by the ube2b-rad18 complex on Lys-164. Monoubiquitination at Lys-164 also takes place in undamaged proliferating cells, and is mediated by the dcx(dtl) complex, leading to enhance PCNA-dependent translesion DNA synthesis.

The protein resides in the nucleus. In terms of biological role, this protein is an auxiliary protein of DNA polymerase delta and is involved in the control of eukaryotic DNA replication by increasing the polymerase's processibility during elongation of the leading strand. This is Proliferating cell nuclear antigen (pcna) from Haplochromis burtoni (Burton's mouthbrooder).